The primary structure comprises 57 residues: Potassium channel toxin alpha-KTx 8.8 (57 aa).

The first 19 residues, 1–19, serve as a signal peptide directing secretion; it reads MCRLYAIILIVLVMNVIMT. The propeptide occupies 20–28; it reads IIPDSKVEV. Cystine bridges form between Cys31–Cys47, Cys34–Cys52, and Cys38–Cys54.

Belongs to the short scorpion toxin superfamily. Potassium channel inhibitor family. Alpha-KTx 08 subfamily. Post-translationally, contains 3 disulfide bonds. In terms of tissue distribution, expressed by the venom gland.

It localises to the secreted. In terms of biological role, selectively inhibits voltage-gated potassium channels rKv1.2/KCNA2 (IC(50)=331 nM) and hKv1.3/KCNA3 (IC(50)=503 nM). Partially inihibts rKv1.6/KCNA6 (IC(50)=9983 nM). This Orthochirus scrobiculosus (Central Asian scorpion) protein is Potassium channel toxin alpha-KTx 8.8.